The following is a 300-amino-acid chain: ATP synthase gamma chain (300 aa).

This sequence belongs to the ATPase gamma chain family. F-type ATPases have 2 components, CF(1) - the catalytic core - and CF(0) - the membrane proton channel. CF(1) has five subunits: alpha(3), beta(3), gamma(1), delta(1), epsilon(1). CF(0) has three main subunits: a, b and c.

The protein localises to the cell membrane. Its function is as follows. Produces ATP from ADP in the presence of a proton gradient across the membrane. The gamma chain is believed to be important in regulating ATPase activity and the flow of protons through the CF(0) complex. The chain is ATP synthase gamma chain from Enterococcus hirae (strain ATCC 9790 / DSM 20160 / JCM 8729 / LMG 6399 / NBRC 3181 / NCIMB 6459 / NCDO 1258 / NCTC 12367 / WDCM 00089 / R).